We begin with the raw amino-acid sequence, 746 residues long: Ring assembly protein 3 (746 aa).

The protein localises to the cytoplasm. In terms of biological role, essential for actinomyosin ring assembly during cytokinesis. Has a role, in conjunction with F-actin, in assembling myosin II-containing proteins, such as myo2, at the division site. This chain is Ring assembly protein 3 (rng3), found in Schizosaccharomyces pombe (strain 972 / ATCC 24843) (Fission yeast).